The following is a 390-amino-acid chain: 8-amino-7-oxononanoate synthase (390 aa).

Arginine 19 contacts substrate. Residue 106–107 participates in pyridoxal 5'-phosphate binding; the sequence is GY. Histidine 131 contacts substrate. Pyridoxal 5'-phosphate is bound by residues serine 176, histidine 204, and threonine 233. Lysine 236 carries the post-translational modification N6-(pyridoxal phosphate)lysine. Residue threonine 350 coordinates substrate.

This sequence belongs to the class-II pyridoxal-phosphate-dependent aminotransferase family. BioF subfamily. As to quaternary structure, homodimer. Requires pyridoxal 5'-phosphate as cofactor.

It carries out the reaction 6-carboxyhexanoyl-[ACP] + L-alanine + H(+) = (8S)-8-amino-7-oxononanoate + holo-[ACP] + CO2. Its pathway is cofactor biosynthesis; biotin biosynthesis. In terms of biological role, catalyzes the decarboxylative condensation of pimeloyl-[acyl-carrier protein] and L-alanine to produce 8-amino-7-oxononanoate (AON), [acyl-carrier protein], and carbon dioxide. This chain is 8-amino-7-oxononanoate synthase, found in Pseudomonas putida (strain W619).